We begin with the raw amino-acid sequence, 449 residues long: Tubulin alpha chain (449 aa).

Residues Gln11, Glu71, Ser140, Gly144, Thr145, Thr179, Asn206, and Asn228 each coordinate GTP. Glu71 contributes to the Mg(2+) binding site. Glu254 is an active-site residue.

Belongs to the tubulin family. In terms of assembly, dimer of alpha and beta chains. A typical microtubule is a hollow water-filled tube with an outer diameter of 25 nm and an inner diameter of 15 nM. Alpha-beta heterodimers associate head-to-tail to form protofilaments running lengthwise along the microtubule wall with the beta-tubulin subunit facing the microtubule plus end conferring a structural polarity. Microtubules usually have 13 protofilaments but different protofilament numbers can be found in some organisms and specialized cells. Mg(2+) is required as a cofactor.

It localises to the cytoplasm. The protein resides in the cytoskeleton. It carries out the reaction GTP + H2O = GDP + phosphate + H(+). In terms of biological role, tubulin is the major constituent of microtubules, a cylinder consisting of laterally associated linear protofilaments composed of alpha- and beta-tubulin heterodimers. Microtubules grow by the addition of GTP-tubulin dimers to the microtubule end, where a stabilizing cap forms. Below the cap, tubulin dimers are in GDP-bound state, owing to GTPase activity of alpha-tubulin. The protein is Tubulin alpha chain (TUB1) of Gibberella zeae (strain ATCC MYA-4620 / CBS 123657 / FGSC 9075 / NRRL 31084 / PH-1) (Wheat head blight fungus).